Consider the following 97-residue polypeptide: Small ribosomal subunit protein bS6 (97 aa).

It belongs to the bacterial ribosomal protein bS6 family.

Functionally, binds together with bS18 to 16S ribosomal RNA. In Listeria innocua serovar 6a (strain ATCC BAA-680 / CLIP 11262), this protein is Small ribosomal subunit protein bS6.